Consider the following 233-residue polypeptide: ATP synthase subunit a (233 aa).

The next 5 helical transmembrane spans lie at phenylalanine 29 to valine 49, valine 86 to valine 106, threonine 118 to leucine 135, valine 188 to leucine 208, and glycine 209 to phenylalanine 229.

Belongs to the ATPase A chain family. F-type ATPases have 2 components, CF(1) - the catalytic core - and CF(0) - the membrane proton channel. CF(1) has five subunits: alpha(3), beta(3), gamma(1), delta(1), epsilon(1). CF(0) has three main subunits: a(1), b(2) and c(9-12). The alpha and beta chains form an alternating ring which encloses part of the gamma chain. CF(1) is attached to CF(0) by a central stalk formed by the gamma and epsilon chains, while a peripheral stalk is formed by the delta and b chains.

The protein localises to the cell inner membrane. Key component of the proton channel; it plays a direct role in the translocation of protons across the membrane. This chain is ATP synthase subunit a, found in Nitratidesulfovibrio vulgaris (strain ATCC 29579 / DSM 644 / CCUG 34227 / NCIMB 8303 / VKM B-1760 / Hildenborough) (Desulfovibrio vulgaris).